Consider the following 448-residue polypeptide: tRNA(Ile)-lysidine synthase (448 aa).

28–33 (STGVDS) is a binding site for ATP.

This sequence belongs to the tRNA(Ile)-lysidine synthase family.

The protein resides in the cytoplasm. It catalyses the reaction cytidine(34) in tRNA(Ile2) + L-lysine + ATP = lysidine(34) in tRNA(Ile2) + AMP + diphosphate + H(+). In terms of biological role, ligates lysine onto the cytidine present at position 34 of the AUA codon-specific tRNA(Ile) that contains the anticodon CAU, in an ATP-dependent manner. Cytidine is converted to lysidine, thus changing the amino acid specificity of the tRNA from methionine to isoleucine. The polypeptide is tRNA(Ile)-lysidine synthase (Lactiplantibacillus plantarum (strain ATCC BAA-793 / NCIMB 8826 / WCFS1) (Lactobacillus plantarum)).